The following is a 359-amino-acid chain: Peptide chain release factor 1 (359 aa).

Position 233 is an N5-methylglutamine (Gln233).

The protein belongs to the prokaryotic/mitochondrial release factor family. Post-translationally, methylated by PrmC. Methylation increases the termination efficiency of RF1.

It is found in the cytoplasm. Peptide chain release factor 1 directs the termination of translation in response to the peptide chain termination codons UAG and UAA. This chain is Peptide chain release factor 1, found in Orientia tsutsugamushi (strain Ikeda) (Rickettsia tsutsugamushi).